Consider the following 172-residue polypeptide: Centrin-2 (172 aa).

A disordered region spans residues 1 to 31 (MASNFKKANMASTTQRKRMSPKPELTEEQKQ). Ala-2 bears the N-acetylalanine mark. The interval 2–25 (ASNFKKANMASTTQRKRMSPKPEL) is required for self-assembly. Ser-20 carries the post-translational modification Phosphoserine. A Glycyl lysine isopeptide (Lys-Gly) (interchain with G-Cter in SUMO2) cross-link involves residue Lys-22. Phosphothreonine is present on Thr-26. EF-hand domains are found at residues 28–63 (EQKQ…LGFE), 64–99 (PKKE…KMSE), 101–136 (DTKE…LGEN), and 137–172 (LSDE…TSLY). Asp-41, Asp-43, Thr-45, Thr-47, and Glu-52 together coordinate Ca(2+). The Ca(2+) site is built by Asp-150, Asp-152, Asp-154, Glu-156, and Glu-161.

This sequence belongs to the centrin family. Monomer. Homooligomer. Interacts with CCP110, SFI1. Component of the XPC complex composed of XPC, RAD23B and CETN2. Component of the nuclear pore complex (NPC)-associated TREX-2 complex (transcription and export complex 2), composed of at least GANP, 2 copies of ENY2, PCID2, SEM1/DSS1, and either centrin CETN2 or centrin CETN3. The TREX-2 complex also associates with ALYREF/ALY and with the nucleoporin NUP153. Interacts with USP49. Forms a microtubule-associated complex with POC5, POC1B and FAM161A. Interacts with CCDC15.

It localises to the cytoplasm. The protein localises to the cytoskeleton. It is found in the microtubule organizing center. Its subcellular location is the centrosome. The protein resides in the centriole. It localises to the nucleus. The protein localises to the nucleus envelope. It is found in the nuclear pore complex. In terms of biological role, plays a fundamental role in microtubule organizing center structure and function. Required for centriole duplication and correct spindle formation. Has a role in regulating cytokinesis and genome stability via cooperation with CALM1 and CCP110. Involved in global genome nucleotide excision repair (GG-NER) by acting as component of the XPC complex. Cooperatively with RAD23B appears to stabilize XPC. In vitro, stimulates DNA binding of the XPC:RAD23B dimer. Its function is as follows. The XPC complex is proposed to represent the first factor bound at the sites of DNA damage and together with other core recognition factors, XPA, RPA and the TFIIH complex, is part of the pre-incision (or initial recognition) complex. The XPC complex recognizes a wide spectrum of damaged DNA characterized by distortions of the DNA helix such as single-stranded loops, mismatched bubbles or single-stranded overhangs. The orientation of XPC complex binding appears to be crucial for inducing a productive NER. XPC complex is proposed to recognize and to interact with unpaired bases on the undamaged DNA strand which is followed by recruitment of the TFIIH complex and subsequent scanning for lesions in the opposite strand in a 5'-to-3' direction by the NER machinery. Cyclobutane pyrimidine dimers (CPDs) which are formed upon UV-induced DNA damage esacpe detection by the XPC complex due to a low degree of structural perurbation. Instead they are detected by the UV-DDB complex which in turn recruits and cooperates with the XPC complex in the respective DNA repair. Functionally, as a component of the TREX-2 complex, involved in the export of mRNAs to the cytoplasm through the nuclear pores. The protein is Centrin-2 (CETN2) of Bos taurus (Bovine).